Reading from the N-terminus, the 526-residue chain is Bifunctional purine biosynthesis protein PurH (526 aa).

An MGS-like domain is found at 1 to 147; the sequence is MSSIKRALIS…KNWKHVAIVT (147 aa).

It belongs to the PurH family.

The enzyme catalyses (6R)-10-formyltetrahydrofolate + 5-amino-1-(5-phospho-beta-D-ribosyl)imidazole-4-carboxamide = 5-formamido-1-(5-phospho-D-ribosyl)imidazole-4-carboxamide + (6S)-5,6,7,8-tetrahydrofolate. It carries out the reaction IMP + H2O = 5-formamido-1-(5-phospho-D-ribosyl)imidazole-4-carboxamide. Its pathway is purine metabolism; IMP biosynthesis via de novo pathway; 5-formamido-1-(5-phospho-D-ribosyl)imidazole-4-carboxamide from 5-amino-1-(5-phospho-D-ribosyl)imidazole-4-carboxamide (10-formyl THF route): step 1/1. It functions in the pathway purine metabolism; IMP biosynthesis via de novo pathway; IMP from 5-formamido-1-(5-phospho-D-ribosyl)imidazole-4-carboxamide: step 1/1. In Neisseria meningitidis serogroup B (strain ATCC BAA-335 / MC58), this protein is Bifunctional purine biosynthesis protein PurH.